The primary structure comprises 61 residues: Metallothionein-1 (61 aa).

Methionine 1 carries the post-translational modification N-acetylmethionine. A beta region spans residues 1 to 29 (MDPNCSCATGVSCTCADSCKCKECKCTSC). 20 residues coordinate a divalent metal cation: cysteine 5, cysteine 7, cysteine 13, cysteine 15, cysteine 19, cysteine 21, cysteine 24, cysteine 26, cysteine 29, cysteine 33, cysteine 34, cysteine 36, cysteine 37, cysteine 41, cysteine 44, cysteine 48, cysteine 50, cysteine 57, cysteine 59, and cysteine 60. Residues 30-61 (KKSCCSCCPVGCAKCAQGCVCKGASEKCNCCA) are alpha.

The protein belongs to the metallothionein superfamily. Type 1 family.

Its function is as follows. Metallothioneins have a high content of cysteine residues that bind various heavy metals; these proteins are transcriptionally regulated by both heavy metals and glucocorticoids. The protein is Metallothionein-1 (MT1) of Chlorocebus aethiops (Green monkey).